Consider the following 241-residue polypeptide: Phosphatidylcholine synthase (241 aa).

Topologically, residues 1–15 (MKIFNYKRVPYAEIR) are cytoplasmic. The helical transmembrane segment at 16–36 (AFSVHILTASGSFLAFLGVVA) threads the bilayer. Topologically, residues 37 to 41 (ASEHR) are periplasmic. The helical transmembrane segment at 42–62 (FVDMFWWLGLALLVDGIDGPI) threads the bilayer. Residues 63–76 (ARKVRVKEVLPNWS) are Cytoplasmic-facing. A helical membrane pass occupies residues 77–97 (GDTLDNIIDYVTYVLLPAFAL). Residues 98–100 (YQS) lie on the Periplasmic side of the membrane. The helical transmembrane segment at 101 to 121 (GMIGEPLSFVAAGMIVVSSAI) threads the bilayer. Residues 122-133 (YYADMGMKTDEY) are Cytoplasmic-facing. A helical membrane pass occupies residues 134-154 (FFSGFPVVWNMVVFTLFVMDA). At 155 to 159 (SATTA) the chain is on the periplasmic side. A helical membrane pass occupies residues 160-180 (MTVVTVSVFLTFLPINFLHPV). The Cytoplasmic portion of the chain corresponds to 181-187 (RVKRLRP). Residues 188-208 (LNLLVVAIWCALGGYALLMHF) traverse the membrane as a helical segment. Residues 209 to 214 (ETPTWA) lie on the Periplasmic side of the membrane. The chain crosses the membrane as a helical span at residues 215-235 (VIAFVASGIYLYCIGGILQFF). At 236-241 (PSLGAK) the chain is on the cytoplasmic side.

This sequence belongs to the CDP-alcohol phosphatidyltransferase class-I family. Mn(2+) serves as cofactor.

Its subcellular location is the cell inner membrane. It carries out the reaction a CDP-1,2-diacyl-sn-glycerol + choline = a 1,2-diacyl-sn-glycero-3-phosphocholine + CMP + H(+). In terms of biological role, condenses choline with CDP-diglyceride to produce phosphatidylcholine and CMP. Affects motility, biofilm formation and virulence of this bacterium when there is a complete loss of phosphatidylcholine formation due to absence of both the synthase (pcs) and the methylation (pmtA) pathways. The protein is Phosphatidylcholine synthase of Agrobacterium fabrum (strain C58 / ATCC 33970) (Agrobacterium tumefaciens (strain C58)).